The primary structure comprises 1606 residues: Fatty acid synthase apf5 (1606 aa).

The Carrier domain occupies 142 to 218 (VPVSAILISL…ETLSTSHDGQ (77 aa)). Serine 177 carries the post-translational modification O-(pantetheine 4'-phosphoryl)serine. The region spanning 996–1539 (KESLIEVALQ…QKGGQALLVH (544 aa)) is the Ketosynthase family 3 (KS3) domain. Active-site for beta-ketoacyl synthase activity residues include cysteine 1182, histidine 1424, and histidine 1465.

It belongs to the thiolase-like superfamily. Fungal fatty acid synthetase subunit alpha family.

It catalyses the reaction a fatty acyl-[ACP] + malonyl-[ACP] + H(+) = a 3-oxoacyl-[ACP] + holo-[ACP] + CO2. The protein operates within secondary metabolite biosynthesis. Functionally, fatty acid synthase; part of the gene cluster that mediates the biosynthesis of the cyclic tetrapeptide apicidin F (APF). The non-ribosomal peptide synthetase apf1 incorporates four different amino acids to produce apicidin F: L-phenylalanine, D-pipecolic acid (D-pip), N-methoxy-L-tryptophan and L-2-aminooctanedioic acid. L-Phenylalanine is the only proteinogenic amino acid directly used by apf1. The 3 other apf1 substrates are non-proteinogenic and have to be modified by other enzymes of the cluster. Lysine is converted to delta-1-pyrroline-5-carboxylate (P5C) which is reduced to L-pipecolic acid (L-pip) by apf3. L-pip is epimerized to D-pip, probably by apf1 activity, prior to incorporation. L-Tryptophan is N-oxidyzed by one of the cytochrome P450 monooxygenases (apf7 or apf8), and further methylated at the hydroxy group by the O-methyltransferase apf6 to yield N-methoxy-L-tryptophan. The synthesis of the fourth apf1 substrate is more complex. The fatty acid synthase apf5 is involved in the synthesis of the octanoic acid backbone of L-2-aminooctanedioic acid by fixing one acetyl-CoA unit and three malonyl-CoA units. Then one of the cytochrome P450 monooxygenases (apf7 or apf8) may oxidize this backbone to 2-oxooctanoic acid. The aminotransferase apf4 is predicted to catalyze the exchange of the keto group with an amino group. The next step would be the oxidation of 2-aminooctanoic acid by one of the cytochrome P450 monooxygenases (apf7 or apf8). The last step is the oxidation of 2-amino-8-hydroxyoctanoic acid to 2-aminooctanedioic acid is catalyzed by the FAD-dependent monooxygenase apf9. The sequence is that of Fatty acid synthase apf5 from Gibberella fujikuroi (strain CBS 195.34 / IMI 58289 / NRRL A-6831) (Bakanae and foot rot disease fungus).